A 191-amino-acid chain; its full sequence is dCTP deaminase (191 aa).

Residues 112–117 (KSTYAR), 136–138 (TLE), Gln157, Tyr173, and Gln183 each bind dCTP. Catalysis depends on Glu138, which acts as the Proton donor/acceptor.

This sequence belongs to the dCTP deaminase family. In terms of assembly, homotrimer.

It carries out the reaction dCTP + H2O + H(+) = dUTP + NH4(+). It participates in pyrimidine metabolism; dUMP biosynthesis; dUMP from dCTP (dUTP route): step 1/2. In terms of biological role, catalyzes the deamination of dCTP to dUTP. This is dCTP deaminase from Psychrobacter sp. (strain PRwf-1).